Here is a 323-residue protein sequence, read N- to C-terminus: Calcium homeostasis modulator protein 2 (323 aa).

Residues 1-21 (MAALIAENFRFLSLFFKSKDV) lie on the Cytoplasmic side of the membrane. Residues 14-39 (LFFKSKDVMIFNGLVALGTVGSQELF) form a central pore region. A helical transmembrane segment spans residues 22 to 43 (MIFNGLVALGTVGSQELFTVVA). Residues 44–52 (FHCPCSPAR) are Extracellular-facing. 2 cysteine pairs are disulfide-bonded: Cys46–Cys130 and Cys48–Cys162. The chain crosses the membrane as a helical span at residues 53-76 (NYLYGLAAIGVPALALFLIGVILN). Over 77 to 101 (NHTWNLVAECQYRRTKNCSAAPNFL) the chain is Cytoplasmic. The helical transmembrane segment at 102–132 (LLSSIVGRAAVAPVTWSVISLLRGEAYVCAL) threads the bilayer. Residues 133-179 (SEFVNPHSLMVGERSFPVAHATEILARFPCGEGPANLSVFREEVSRR) are Extracellular-facing. Positions 145 to 152 (ERSFPVAH) are hemichannel docking. Residues 180–206 (LKYESQLFGWLLIGVVAILVFLTKCLK) traverse the membrane as a helical segment. The Cytoplasmic portion of the chain corresponds to 207 to 323 (HYCSPLSYRQ…DHVEMSLLPS (117 aa)). Positions 214-251 (YRQEAYWAQYRANEDQLFQRTAEVHSRVLAANNVRRFF) are intersubunit interaction.

Belongs to the CALHM family. In terms of assembly, homo-undecamer. Two undecameric hemichannels can assemble in a head-to-head manner to form a gap junction.

Its subcellular location is the cell membrane. The enzyme catalyses ATP(in) = ATP(out). Pore-forming subunit of Ca(2+) homeostasis modulator channels. Mediates ATP release from astrocytes and ATP-induced Ca(2+) influx in microglia thus regulating neuronal ATP and Ca(2+) homeostasis, synaptic transmission and neuroinflammatory response. May form intercellular gap junctions. The gating mechanism remains unknown. The protein is Calcium homeostasis modulator protein 2 (CALHM2) of Bos taurus (Bovine).